The primary structure comprises 47 residues: MARYRCCRSRSRCRRRRRSCRRRRRCRRRRARRSCRRRYSLRCCRRY.

It belongs to the protamine P1 family. As to expression, testis.

The protein localises to the nucleus. The protein resides in the chromosome. Its function is as follows. Protamines substitute for histones in the chromatin of sperm during the haploid phase of spermatogenesis. They compact sperm DNA into a highly condensed, stable and inactive complex. The sequence is that of Sperm protamine P1 (PRM1) from Galeopterus variegatus (Malayan flying lemur).